The following is a 672-amino-acid chain: DNA ligase (672 aa).

Residues 35-39, 84-85, and glutamate 115 contribute to the NAD(+) site; these read DAQYD and SL. Lysine 117 serves as the catalytic N6-AMP-lysine intermediate. Residues arginine 138, glutamate 178, lysine 294, and lysine 318 each contribute to the NAD(+) site. Zn(2+) is bound by residues cysteine 412, cysteine 415, cysteine 430, and cysteine 435. The region spanning 592-672 is the BRCT domain; the sequence is ATGGPFVGKS…AFLQMLQTNA (81 aa).

Belongs to the NAD-dependent DNA ligase family. LigA subfamily. Mg(2+) serves as cofactor. Requires Mn(2+) as cofactor.

It carries out the reaction NAD(+) + (deoxyribonucleotide)n-3'-hydroxyl + 5'-phospho-(deoxyribonucleotide)m = (deoxyribonucleotide)n+m + AMP + beta-nicotinamide D-nucleotide.. Functionally, DNA ligase that catalyzes the formation of phosphodiester linkages between 5'-phosphoryl and 3'-hydroxyl groups in double-stranded DNA using NAD as a coenzyme and as the energy source for the reaction. It is essential for DNA replication and repair of damaged DNA. This Myxococcus xanthus (strain DK1622) protein is DNA ligase.